The chain runs to 521 residues: UDP-N-acetylmuramate--L-alanine ligase (521 aa).

136–142 is an ATP binding site; that stretch reads GAHGKTT.

Belongs to the MurCDEF family.

It localises to the cytoplasm. It carries out the reaction UDP-N-acetyl-alpha-D-muramate + L-alanine + ATP = UDP-N-acetyl-alpha-D-muramoyl-L-alanine + ADP + phosphate + H(+). Its pathway is cell wall biogenesis; peptidoglycan biosynthesis. Cell wall formation. This chain is UDP-N-acetylmuramate--L-alanine ligase, found in Bifidobacterium adolescentis (strain ATCC 15703 / DSM 20083 / NCTC 11814 / E194a).